We begin with the raw amino-acid sequence, 201 residues long: Sorting nexin-10 (201 aa).

Residues 8–125 form a required for interaction with ATP6V1D region; sequence EEFVSVWVRD…SLHLFLQSHL (118 aa). Residues 10-127 form the PX domain; the sequence is FVSVWVRDPR…HLFLQSHLNS (118 aa). Positions 53, 79, and 94 each coordinate a 1,2-diacyl-sn-glycero-3-phospho-(1D-myo-inositol-3-phosphate). Residues 156–201 form a disordered region; it reads FPEEDEEGKKENDIDYDSESSSSGLGHSSDDSSSHGCKVNTAPQES.

The protein belongs to the sorting nexin family. As to quaternary structure, interacts with ATP6V1D; may play a role in ciliogenesis.

The protein localises to the cytoplasm. It is found in the endosome membrane. It localises to the cytoskeleton. The protein resides in the microtubule organizing center. Its subcellular location is the centrosome. Functionally, probable phosphoinositide-binding protein involved in protein sorting and membrane trafficking in endosomes. Plays a role in cilium biogenesis through regulation of the transport and the localization of proteins to the cilium. Required for the localization to the cilium of V-ATPase subunit ATP6V1D and ATP6V0D1, and RAB8A. Involved in osteoclast differentiation and therefore bone resorption. This is Sorting nexin-10 (SNX10) from Homo sapiens (Human).